We begin with the raw amino-acid sequence, 89 residues long: Elongation factor 1-beta (89 aa).

It belongs to the EF-1-beta/EF-1-delta family.

Functionally, promotes the exchange of GDP for GTP in EF-1-alpha/GDP, thus allowing the regeneration of EF-1-alpha/GTP that could then be used to form the ternary complex EF-1-alpha/GTP/AAtRNA. The sequence is that of Elongation factor 1-beta from Methanosarcina mazei (strain ATCC BAA-159 / DSM 3647 / Goe1 / Go1 / JCM 11833 / OCM 88) (Methanosarcina frisia).